The chain runs to 128 residues: NHP2-like protein 1 (128 aa).

The interval 36 to 48 (RKGANEATKTLNR) is interaction with U4 snRNA and U4atac snRNA. The segment at 96-128 (SRPVIACAVTIKEGSQLKPQIQSLQQSIERLLV) is important for U4 snRNA-binding.

It belongs to the eukaryotic ribosomal protein eL8 family. Identified in the spliceosome B complex. Component of the U4/U6-U5 tri-snRNP complex. Part of the small subunit (SSU) processome, composed of more than 70 proteins and the RNA chaperone small nucleolar RNA (snoRNA) U3.

It is found in the nucleus. Its subcellular location is the nucleolus. Functionally, part of the small subunit (SSU) processome, first precursor of the small eukaryotic ribosomal subunit. During the assembly of the SSU processome in the nucleolus, many ribosome biogenesis factors, an RNA chaperone and ribosomal proteins associate with the nascent pre-rRNA and work in concert to generate RNA folding, modifications, rearrangements and cleavage as well as targeted degradation of pre-ribosomal RNA by the RNA exosome. Involved in pre-mRNA splicing as component of the spliceosome. Binds to the 5'-stem-loop of U4 snRNA and thereby contributes to spliceosome assembly. The protein undergoes a conformational change upon RNA-binding. Core component of box C/D small nucleolar ribonucleoprotein (snoRNP) complexes that function in methylation of multiple sites on ribosomal RNAs (rRNAs) and messenger RNAs (mRNAs). This chain is NHP2-like protein 1, found in Xenopus tropicalis (Western clawed frog).